Consider the following 99-residue polypeptide: MEKRNIRDHKRRLLATKYELRRKLYKAFCNDPALPSDMRDKHRYKLSKLPRNSSFARVRNRCISTGRPRSVYEFFRISRIVFRGLASRGPLMGIKKSSW.

It belongs to the universal ribosomal protein uS14 family.

The protein localises to the mitochondrion. The chain is Small ribosomal subunit protein uS14m (RPS14) from Oenothera berteroana (Bertero's evening primrose).